The sequence spans 236 residues: 1-(5-phosphoribosyl)-5-[(5-phosphoribosylamino)methylideneamino] imidazole-4-carboxamide isomerase (236 aa).

The active-site Proton acceptor is the Asp-8. The active-site Proton donor is Asp-129.

The protein belongs to the HisA/HisF family.

It localises to the cytoplasm. It catalyses the reaction 1-(5-phospho-beta-D-ribosyl)-5-[(5-phospho-beta-D-ribosylamino)methylideneamino]imidazole-4-carboxamide = 5-[(5-phospho-1-deoxy-D-ribulos-1-ylimino)methylamino]-1-(5-phospho-beta-D-ribosyl)imidazole-4-carboxamide. Its pathway is amino-acid biosynthesis; L-histidine biosynthesis; L-histidine from 5-phospho-alpha-D-ribose 1-diphosphate: step 4/9. The polypeptide is 1-(5-phosphoribosyl)-5-[(5-phosphoribosylamino)methylideneamino] imidazole-4-carboxamide isomerase (Methanosphaerula palustris (strain ATCC BAA-1556 / DSM 19958 / E1-9c)).